Here is an 862-residue protein sequence, read N- to C-terminus: Piwi-like protein 1 (862 aa).

The span at 1-13 (MTGRARARARGRA) shows a compositional bias: basic residues. The tract at residues 1-48 (MTGRARARARGRARGQETVQHVGAAASQQPGYIPPRPQQSPTEGDLVG) is disordered. Arg-14 carries the omega-N-methylarginine; by PRMT5; alternate modification. At Arg-14 the chain carries Symmetric dimethylarginine; by PRMT5; alternate. An Omega-N-methylarginine; by PRMT5 modification is found at Arg-49. Position 53 is an omega-N-methylarginine; alternate (Arg-53). Arg-53 bears the Symmetric dimethylarginine; alternate mark. Positions 218-225 (RRLLKIMN) match the D-box motif. Residues 279–392 (TVLDFMFNLY…LIPELCYLTG (114 aa)) enclose the PAZ domain. Residues 317–319 (TYR) form a required for binding 2'-O-methylated 3'-end of piRNAs region. Arg-371 carries the post-translational modification Omega-N-methylarginine; by PRMT5. Residues 480 to 616 (SKETRGAPLI…LQMNCKMGGE (137 aa)) are MID region. One can recognise a Piwi domain in the interval 556–848 (IVVCLLSSNR…LAFLVGQSIH (293 aa)). Residues Asp-633, Glu-671, Asp-703, and His-837 contribute to the active site.

This sequence belongs to the argonaute family. Piwi subfamily. As to quaternary structure, interacts (via Piwi domain) with DICER1, suggesting that it forms ribonucleoprotein RISC complexes; this interaction is regulated by HSP90AB1 activity. Interacts with MAEL, KIF17, PABPC1, PRMT5 and WDR77. Interacts (when methylated on arginine residues) with TDRD1, TDRKH/TDRD2, RNF17/TDRD4, TDRD6, TDRD7 and TDRD9. Interacts with CLOCK. Interacts with MOV10L1. Interacts with ANAPC10; interaction oly takes place following piRNA-binding. Interacts with RNF8; leading to sequester RNF8 in the cytoplasm. Interacts with Tex19.1 and, probably, Tex19.2. It depends on Mg(2+) as a cofactor. Post-translationally, ubiquitinated by the anaphase promoting complex/cyclosome (APC/C) in late spermatids, leading to its degradation. Ubiquitination only takes place following piRNA-binding in adult testis. Ubiquitination and degradation in late spermatogenesis by APC/C is probably required to release RNF8 from the cytoplasm and promote histone to protamine exchange by RNF8. Arginine methylation by PRMT5 is required for the interaction with Tudor domain-containing protein (TDRD1, TDRKH/TDRD2, RNF17/TDRD4, TDRD6, TDRD7 and TDRD9) and subsequent localization to the meiotic nuage, also named P granule. As to expression, expressed in brain. Expressed in testis, specifically in spermatocytes (at protein level). Only detected in germ lineage cells of adult testis. Expressed in male gonads 2 weeks after birth at the initiation of spermatogenesis, but not expressed in female gonads.

It is found in the cytoplasm. Endoribonuclease that plays a central role in postnatal germ cells by repressing transposable elements and preventing their mobilization, which is essential for the germline integrity. Acts via the piRNA metabolic process, which mediates the repression of transposable elements during meiosis by forming complexes composed of piRNAs and Piwi proteins and governs the methylation and subsequent repression of transposons. Directly binds methylated piRNAs, a class of 24 to 30 nucleotide RNAs that are generated by a Dicer-independent mechanism and are primarily derived from transposons and other repeated sequence elements. Strongly prefers a uridine in the first position of their guide (g1U preference, also named 1U-bias). Not involved in the piRNA amplification loop, also named ping-pong amplification cycle. Acts as an endoribonuclease that cleaves transposon messenger RNAs. Besides their function in transposable elements repression, piRNAs are probably involved in other processes during meiosis such as translation regulation. Probable component of some RISC complex, which mediates RNA cleavage and translational silencing. Also plays a role in the formation of chromatoid bodies and is required for some miRNAs stability. Required to sequester RNF8 in the cytoplasm until late spermatogenesis; RNF8 being released upon ubiquitination and degradation of PIWIL1. The sequence is that of Piwi-like protein 1 from Mus musculus (Mouse).